The primary structure comprises 586 residues: DNA-directed RNA polymerase subunit beta' (586 aa).

Residues cysteine 64, cysteine 66, cysteine 85, and cysteine 88 each contribute to the Zn(2+) site. Mg(2+) contacts are provided by aspartate 448, aspartate 450, and aspartate 452.

This sequence belongs to the RNA polymerase beta' chain family. RpoC1 subfamily. In terms of assembly, in plastids the minimal PEP RNA polymerase catalytic core is composed of four subunits: alpha, beta, beta', and beta''. When a (nuclear-encoded) sigma factor is associated with the core the holoenzyme is formed, which can initiate transcription. Requires Mg(2+) as cofactor. Zn(2+) serves as cofactor.

It is found in the plastid. It localises to the chloroplast. The enzyme catalyses RNA(n) + a ribonucleoside 5'-triphosphate = RNA(n+1) + diphosphate. Its function is as follows. DNA-dependent RNA polymerase catalyzes the transcription of DNA into RNA using the four ribonucleoside triphosphates as substrates. In Euglena gracilis, this protein is DNA-directed RNA polymerase subunit beta'.